A 274-amino-acid polypeptide reads, in one-letter code: Penicillin-insensitive murein endopeptidase (274 aa).

The N-terminal stretch at 1–19 (MNKTAIALLALLASSASLA) is a signal peptide. Intrachain disulfides connect Cys44–Cys265, Cys187–Cys235, and Cys216–Cys223. Positions 110, 113, 120, 147, 150, and 211 each coordinate Zn(2+). The interval 228–264 (LPPPGDGCGAELQSWFAPPKPGTTKPEKKTPSPLPPS) is disordered.

The protein belongs to the peptidase M74 family. In terms of assembly, dimer. Zn(2+) is required as a cofactor.

It is found in the periplasm. Murein endopeptidase that cleaves the D-alanyl-meso-2,6-diamino-pimelyl amide bond that connects peptidoglycan strands. Likely plays a role in the removal of murein from the sacculus. This is Penicillin-insensitive murein endopeptidase from Escherichia coli (strain 55989 / EAEC).